Here is a 238-residue protein sequence, read N- to C-terminus: 1-(5-phosphoribosyl)-5-[(5-phosphoribosylamino)methylideneamino] imidazole-4-carboxamide isomerase (238 aa).

Catalysis depends on aspartate 8, which acts as the Proton acceptor. Residue aspartate 129 is the Proton donor of the active site.

The protein belongs to the HisA/HisF family.

The protein localises to the cytoplasm. It carries out the reaction 1-(5-phospho-beta-D-ribosyl)-5-[(5-phospho-beta-D-ribosylamino)methylideneamino]imidazole-4-carboxamide = 5-[(5-phospho-1-deoxy-D-ribulos-1-ylimino)methylamino]-1-(5-phospho-beta-D-ribosyl)imidazole-4-carboxamide. It participates in amino-acid biosynthesis; L-histidine biosynthesis; L-histidine from 5-phospho-alpha-D-ribose 1-diphosphate: step 4/9. The sequence is that of 1-(5-phosphoribosyl)-5-[(5-phosphoribosylamino)methylideneamino] imidazole-4-carboxamide isomerase from Anaeromyxobacter sp. (strain Fw109-5).